The chain runs to 341 residues: Zinc transporter ZIP11 (341 aa).

The next 7 helical transmembrane spans lie at 12-32 (LLGT…VFVF), 44-64 (LGFA…APAV), 72-92 (GFGS…AAFV), 193-213 (IALL…AVGV), 262-284 (FWYG…FAVV), 289-306 (ILPY…YVIM), and 321-341 (LASW…VGLG).

Belongs to the ZIP transporter (TC 2.A.5) family.

The protein resides in the cell membrane. It is found in the nucleus. It localises to the cytoplasm. The protein localises to the golgi apparatus. The enzyme catalyses Zn(2+)(in) = Zn(2+)(out). It catalyses the reaction Cu(2+)(in) = Cu(2+)(out). Zinc importer that regulates cytosolic zinc concentrations either via zinc influx from the extracellular compartment or efflux from intracellular organelles such as Golgi apparatus. May transport copper ions as well. The transport mechanism remains to be elucidated. This is Zinc transporter ZIP11 (SLC39A11) from Bos taurus (Bovine).